Here is a 542-residue protein sequence, read N- to C-terminus: CTP synthase (542 aa).

Residues 1-269 (MQTKYIFITG…DALICELLHL (269 aa)) form an amidoligase domain region. Residue Ser14 coordinates CTP. Ser14 is a UTP binding site. Residues 15–20 (SLGKGL) and Asp72 each bind ATP. Residues Asp72 and Glu143 each coordinate Mg(2+). CTP contacts are provided by residues 150–152 (DIE), 189–194 (KTKPSQ), and Lys225. UTP contacts are provided by residues 189-194 (KTKPSQ) and Lys225. 241–243 (KDV) contacts ATP. The Glutamine amidotransferase type-1 domain occupies 301-538 (YVQHQDAYKS…IQAMIIYHKS (238 aa)). Residue Gly358 coordinates L-glutamine. The active-site Nucleophile; for glutamine hydrolysis is the Cys385. L-glutamine is bound by residues 386–389 (LGMQ), Glu409, and Arg466. Active-site residues include His511 and Glu513.

The protein belongs to the CTP synthase family. Homotetramer.

It carries out the reaction UTP + L-glutamine + ATP + H2O = CTP + L-glutamate + ADP + phosphate + 2 H(+). The enzyme catalyses L-glutamine + H2O = L-glutamate + NH4(+). The catalysed reaction is UTP + NH4(+) + ATP = CTP + ADP + phosphate + 2 H(+). The protein operates within pyrimidine metabolism; CTP biosynthesis via de novo pathway; CTP from UDP: step 2/2. With respect to regulation, allosterically activated by GTP, when glutamine is the substrate; GTP has no effect on the reaction when ammonia is the substrate. The allosteric effector GTP functions by stabilizing the protein conformation that binds the tetrahedral intermediate(s) formed during glutamine hydrolysis. Inhibited by the product CTP, via allosteric rather than competitive inhibition. Functionally, catalyzes the ATP-dependent amination of UTP to CTP with either L-glutamine or ammonia as the source of nitrogen. Regulates intracellular CTP levels through interactions with the four ribonucleotide triphosphates. This chain is CTP synthase, found in Protochlamydia amoebophila (strain UWE25).